The following is a 339-amino-acid chain: UDP-N-acetylglucosamine--N-acetylmuramyl-(pentapeptide) pyrophosphoryl-undecaprenol N-acetylglucosamine transferase (339 aa).

UDP-N-acetyl-alpha-D-glucosamine contacts are provided by residues 9 to 11, asparagine 119, arginine 160, serine 188, and glutamine 280; that span reads TGG.

It belongs to the glycosyltransferase 28 family. MurG subfamily.

The protein localises to the cell inner membrane. The enzyme catalyses di-trans,octa-cis-undecaprenyl diphospho-N-acetyl-alpha-D-muramoyl-L-alanyl-D-glutamyl-meso-2,6-diaminopimeloyl-D-alanyl-D-alanine + UDP-N-acetyl-alpha-D-glucosamine = di-trans,octa-cis-undecaprenyl diphospho-[N-acetyl-alpha-D-glucosaminyl-(1-&gt;4)]-N-acetyl-alpha-D-muramoyl-L-alanyl-D-glutamyl-meso-2,6-diaminopimeloyl-D-alanyl-D-alanine + UDP + H(+). The protein operates within cell wall biogenesis; peptidoglycan biosynthesis. In terms of biological role, cell wall formation. Catalyzes the transfer of a GlcNAc subunit on undecaprenyl-pyrophosphoryl-MurNAc-pentapeptide (lipid intermediate I) to form undecaprenyl-pyrophosphoryl-MurNAc-(pentapeptide)GlcNAc (lipid intermediate II). The protein is UDP-N-acetylglucosamine--N-acetylmuramyl-(pentapeptide) pyrophosphoryl-undecaprenol N-acetylglucosamine transferase of Thermus thermophilus (strain ATCC BAA-163 / DSM 7039 / HB27).